The following is a 324-amino-acid chain: Beta-ketoacyl-[acyl-carrier-protein] synthase III (324 aa).

Residue cysteine 112 is part of the active site. Residues 181 to 202 are disordered; it reads TDGSRGQNLTSGNNPLRSPFSD. Residues 184 to 196 show a composition bias toward polar residues; it reads SRGQNLTSGNNPL. Histidine 249 is a catalytic residue. Residues 250–254 are ACP-binding; that stretch reads QANRR. The active site involves asparagine 279.

It belongs to the thiolase-like superfamily. FabH family. As to quaternary structure, homodimer.

The protein resides in the cytoplasm. The enzyme catalyses malonyl-[ACP] + acetyl-CoA + H(+) = 3-oxobutanoyl-[ACP] + CO2 + CoA. Its pathway is lipid metabolism; fatty acid biosynthesis. Its function is as follows. Catalyzes the condensation reaction of fatty acid synthesis by the addition to an acyl acceptor of two carbons from malonyl-ACP. Catalyzes the first condensation reaction which initiates fatty acid synthesis and may therefore play a role in governing the total rate of fatty acid production. Possesses both acetoacetyl-ACP synthase and acetyl transacylase activities. Its substrate specificity determines the biosynthesis of branched-chain and/or straight-chain of fatty acids. The chain is Beta-ketoacyl-[acyl-carrier-protein] synthase III from Streptococcus uberis (strain ATCC BAA-854 / 0140J).